The chain runs to 390 residues: Succinate--CoA ligase [ADP-forming] subunit beta (390 aa).

Residues 9–245 (KHLLKKYNIP…TTQEDEHETM (237 aa)) form the ATP-grasp domain. Residues lysine 46, 53–55 (GRG), glutamate 99, serine 102, and glutamate 107 contribute to the ATP site. Positions 200 and 214 each coordinate Mg(2+). Substrate-binding positions include asparagine 265 and 322–324 (GIV).

This sequence belongs to the succinate/malate CoA ligase beta subunit family. Heterotetramer of two alpha and two beta subunits. Mg(2+) serves as cofactor.

The enzyme catalyses succinate + ATP + CoA = succinyl-CoA + ADP + phosphate. The catalysed reaction is GTP + succinate + CoA = succinyl-CoA + GDP + phosphate. It participates in carbohydrate metabolism; tricarboxylic acid cycle; succinate from succinyl-CoA (ligase route): step 1/1. Succinyl-CoA synthetase functions in the citric acid cycle (TCA), coupling the hydrolysis of succinyl-CoA to the synthesis of either ATP or GTP and thus represents the only step of substrate-level phosphorylation in the TCA. The beta subunit provides nucleotide specificity of the enzyme and binds the substrate succinate, while the binding sites for coenzyme A and phosphate are found in the alpha subunit. This Coxiella burnetii (strain Dugway 5J108-111) protein is Succinate--CoA ligase [ADP-forming] subunit beta.